The chain runs to 432 residues: Trigger factor (432 aa).

Residues 161-246 (EDRVTIDFTG…LKKVEERELP (86 aa)) form the PPIase FKBP-type domain.

The protein belongs to the FKBP-type PPIase family. Tig subfamily. As to quaternary structure, homodimer and monomer. In vivo most of the ribosomes are in complex with monomeric TF. Uncomplexed TF, however, is in a monomer-dimer equilibrium with approximately two thirds of TF existing in a dimeric state.

Its subcellular location is the cytoplasm. It catalyses the reaction [protein]-peptidylproline (omega=180) = [protein]-peptidylproline (omega=0). In terms of biological role, involved in protein export. Acts as a chaperone by maintaining the newly synthesized protein in an open conformation. Functions as a peptidyl-prolyl cis-trans isomerase. This Shigella boydii serotype 18 (strain CDC 3083-94 / BS512) protein is Trigger factor.